Consider the following 351-residue polypeptide: Probable aldo-keto reductase 2 (351 aa).

The Proton donor role is filled by Y67. H134 lines the substrate pocket. 213–223 (SPLGRGFFSAG) provides a ligand contact to NADP(+). Positions 317–351 (YASTDDVRGDRYPQAMANTTWQNSETPPLSSWKAQ) are disordered. The segment covering 332-351 (MANTTWQNSETPPLSSWKAQ) has biased composition (polar residues).

The protein belongs to the aldo/keto reductase family.

This chain is Probable aldo-keto reductase 2, found in Oryza sativa subsp. indica (Rice).